Reading from the N-terminus, the 265-residue chain is Small ribosomal subunit protein uS5 (265 aa).

Residues 1 to 25 (MADTTTAAQADQKPTRAFGAGRPQR) show a composition bias toward low complexity. The interval 1-49 (MADTTTAAQADQKPTRAFGAGRPQRGAGGAPQRGGPRPQRGGQGETKSW) is disordered. Ala2 carries the N-acetylalanine modification. The S5 DRBM domain maps to 89 to 152 (LKDEVMKIVP…VAAKLSVIPV (64 aa)).

The protein belongs to the universal ribosomal protein uS5 family.

Functionally, component of the ribosome, a large ribonucleoprotein complex responsible for the synthesis of proteins in the cell. The small ribosomal subunit (SSU) binds messenger RNAs (mRNAs) and translates the encoded message by selecting cognate aminoacyl-transfer RNA (tRNA) molecules. The large subunit (LSU) contains the ribosomal catalytic site termed the peptidyl transferase center (PTC), which catalyzes the formation of peptide bonds, thereby polymerizing the amino acids delivered by tRNAs into a polypeptide chain. The nascent polypeptides leave the ribosome through a tunnel in the LSU and interact with protein factors that function in enzymatic processing, targeting, and the membrane insertion of nascent chains at the exit of the ribosomal tunnel. Plays a role in the assembly and function of the 40S ribosomal subunit. Mutations in this protein affects the control of translational fidelity. Involved in nucleolar processing of pre-18S ribosomal RNA and ribosome assembly. This chain is Small ribosomal subunit protein uS5 (rps2), found in Dictyostelium discoideum (Social amoeba).